The following is a 112-amino-acid chain: uncharacterized protein (112 aa).

Helical transmembrane passes span 7-26 and 36-58; these read PSFH…TLDY and TYMH…FFLY.

Its subcellular location is the membrane. This is an uncharacterized protein from Saccharomyces cerevisiae (strain ATCC 204508 / S288c) (Baker's yeast).